A 47-amino-acid chain; its full sequence is Potassium channel toxin gamma-KTx 5.1 (47 aa).

4 disulfides stabilise this stretch: C5–C23, C11–C34, C20–C39, and C24–C41.

Belongs to the ergtoxin family. Gamma-KTx 5 subfamily. As to expression, expressed by the venom gland.

It localises to the secreted. Functionally, reversibly blocks Kv11/ERG potassium channels. The protein is Potassium channel toxin gamma-KTx 5.1 of Centruroides sculpturatus (Arizona bark scorpion).